Consider the following 89-residue polypeptide: Small ribosomal subunit protein uS15 (89 aa).

The protein belongs to the universal ribosomal protein uS15 family. As to quaternary structure, part of the 30S ribosomal subunit. Forms a bridge to the 50S subunit in the 70S ribosome, contacting the 23S rRNA.

Functionally, one of the primary rRNA binding proteins, it binds directly to 16S rRNA where it helps nucleate assembly of the platform of the 30S subunit by binding and bridging several RNA helices of the 16S rRNA. In terms of biological role, forms an intersubunit bridge (bridge B4) with the 23S rRNA of the 50S subunit in the ribosome. In Shewanella loihica (strain ATCC BAA-1088 / PV-4), this protein is Small ribosomal subunit protein uS15.